The following is a 184-amino-acid chain: MRSLSEIIAPSSYWTLAGTIGLNTNIFEINLINLILVLGILFYYGKGVLINLLENRERTILNTIQDAEERHKEATEKLQRARLRLQQAEMKADEIRIIGLTKMDRERRDLVDAADNDLRELEESKNYAIRFEKQRAIEQVRQQVSRLASERAFESLNGRLTNEFQLRMIDYHIGLLRAMANKST.

A helical membrane pass occupies residues 29 to 49 (INLINLILVLGILFYYGKGVL).

The protein belongs to the ATPase B chain family. As to quaternary structure, F-type ATPases have 2 components, F(1) - the catalytic core - and F(0) - the membrane proton channel. F(1) has five subunits: alpha(3), beta(3), gamma(1), delta(1), epsilon(1). F(0) has four main subunits: a(1), b(1), b'(1) and c(10-14). The alpha and beta chains form an alternating ring which encloses part of the gamma chain. F(1) is attached to F(0) by a central stalk formed by the gamma and epsilon chains, while a peripheral stalk is formed by the delta, b and b' chains.

Its subcellular location is the plastid. The protein resides in the chloroplast thylakoid membrane. F(1)F(0) ATP synthase produces ATP from ADP in the presence of a proton or sodium gradient. F-type ATPases consist of two structural domains, F(1) containing the extramembraneous catalytic core and F(0) containing the membrane proton channel, linked together by a central stalk and a peripheral stalk. During catalysis, ATP synthesis in the catalytic domain of F(1) is coupled via a rotary mechanism of the central stalk subunits to proton translocation. Its function is as follows. Component of the F(0) channel, it forms part of the peripheral stalk, linking F(1) to F(0). This is ATP synthase subunit b, chloroplastic from Adiantum capillus-veneris (Maidenhair fern).